The following is a 267-amino-acid chain: MWIGVVSLFPEMFEAITRYGVTGRAVDQGLLEVDFWNPRDYATDKHRTVDDRPYGGGPGMLMKVATLRPAIAEARRDAERRGCAPARTRVVYLSPQGRRLDQRGVRELADLEALIVVAGRYEGIDERVVEADIDEEWSIGDYVLSGGELPAMVMVDAVSRLVPGVLGHGDSALEDSFSEGLLDCPHYTRPETIDGRQVPDILLSGNHAAIRRWRLKQSLGRTWLRRPELLEGRALDREQQRLLDEFIAEQATSQNVGRTEERRPLEE.

Residues Gly119 and 139-144 (IGDYVL) each bind S-adenosyl-L-methionine.

It belongs to the RNA methyltransferase TrmD family. In terms of assembly, homodimer.

The protein localises to the cytoplasm. The enzyme catalyses guanosine(37) in tRNA + S-adenosyl-L-methionine = N(1)-methylguanosine(37) in tRNA + S-adenosyl-L-homocysteine + H(+). Specifically methylates guanosine-37 in various tRNAs. This is tRNA (guanine-N(1)-)-methyltransferase from Chromohalobacter salexigens (strain ATCC BAA-138 / DSM 3043 / CIP 106854 / NCIMB 13768 / 1H11).